We begin with the raw amino-acid sequence, 321 residues long: Lipoyl synthase (321 aa).

Positions 68, 73, 79, 94, 98, 101, and 308 each coordinate [4Fe-4S] cluster. A Radical SAM core domain is found at 80–297 (FNHGTATFMI…KEVALELGFT (218 aa)).

Belongs to the radical SAM superfamily. Lipoyl synthase family. It depends on [4Fe-4S] cluster as a cofactor.

It is found in the cytoplasm. The catalysed reaction is [[Fe-S] cluster scaffold protein carrying a second [4Fe-4S](2+) cluster] + N(6)-octanoyl-L-lysyl-[protein] + 2 oxidized [2Fe-2S]-[ferredoxin] + 2 S-adenosyl-L-methionine + 4 H(+) = [[Fe-S] cluster scaffold protein] + N(6)-[(R)-dihydrolipoyl]-L-lysyl-[protein] + 4 Fe(3+) + 2 hydrogen sulfide + 2 5'-deoxyadenosine + 2 L-methionine + 2 reduced [2Fe-2S]-[ferredoxin]. The protein operates within protein modification; protein lipoylation via endogenous pathway; protein N(6)-(lipoyl)lysine from octanoyl-[acyl-carrier-protein]: step 2/2. In terms of biological role, catalyzes the radical-mediated insertion of two sulfur atoms into the C-6 and C-8 positions of the octanoyl moiety bound to the lipoyl domains of lipoate-dependent enzymes, thereby converting the octanoylated domains into lipoylated derivatives. This chain is Lipoyl synthase, found in Vibrio cholerae serotype O1 (strain ATCC 39315 / El Tor Inaba N16961).